The following is a 336-amino-acid chain: UDP-N-acetylglucosamine--N-acetylmuramyl-(pentapeptide) pyrophosphoryl-undecaprenol N-acetylglucosamine transferase (336 aa).

Residues Asn102, Arg144, Ser172, and Gln264 each coordinate UDP-N-acetyl-alpha-D-glucosamine.

It belongs to the glycosyltransferase 28 family. MurG subfamily.

Its subcellular location is the cell membrane. It catalyses the reaction di-trans,octa-cis-undecaprenyl diphospho-N-acetyl-alpha-D-muramoyl-L-alanyl-D-glutamyl-meso-2,6-diaminopimeloyl-D-alanyl-D-alanine + UDP-N-acetyl-alpha-D-glucosamine = di-trans,octa-cis-undecaprenyl diphospho-[N-acetyl-alpha-D-glucosaminyl-(1-&gt;4)]-N-acetyl-alpha-D-muramoyl-L-alanyl-D-glutamyl-meso-2,6-diaminopimeloyl-D-alanyl-D-alanine + UDP + H(+). It participates in cell wall biogenesis; peptidoglycan biosynthesis. Functionally, cell wall formation. Catalyzes the transfer of a GlcNAc subunit on undecaprenyl-pyrophosphoryl-MurNAc-pentapeptide (lipid intermediate I) to form undecaprenyl-pyrophosphoryl-MurNAc-(pentapeptide)GlcNAc (lipid intermediate II). The sequence is that of UDP-N-acetylglucosamine--N-acetylmuramyl-(pentapeptide) pyrophosphoryl-undecaprenol N-acetylglucosamine transferase from Rubrobacter xylanophilus (strain DSM 9941 / JCM 11954 / NBRC 16129 / PRD-1).